The sequence spans 372 residues: Probable peptidoglycan glycosyltransferase FtsW (372 aa).

The Cytoplasmic portion of the chain corresponds to 1–12 (MQKKSTISWSYD). A helical transmembrane segment spans residues 13–33 (AWIVICTLSLLALGLLMVASA). Topologically, residues 34–45 (SMVISDRQFGYP) are periplasmic. The chain crosses the membrane as a helical span at residues 46–66 (FHYFIRHLIYLSLGLTLAWVA). Over 67–77 (SRVPIKVWKTY) the chain is Cytoplasmic. Residues 78-98 (SGYLFLVGFLLLILVLAPVIG) form a helical membrane-spanning segment. At 99 to 109 (KTVNGSRRWIQ) the chain is on the periplasmic side. Residues 110-130 (LGFISLQVSEVVKFVTILYLA) form a helical membrane-spanning segment. Topologically, residues 131-142 (SFLQRYQSEVQK) are cytoplasmic. The helical transmembrane segment at 143–163 (ELKGFLKPMLLVGILSGLLLL) threads the bilayer. The Periplasmic segment spans residues 164–165 (EP). Residues 166–186 (DFGAAVVITMTCLALLFLAGV) traverse the membrane as a helical segment. Arg187 is a topological domain (cytoplasmic). The chain crosses the membrane as a helical span at residues 188–208 (LWPFCVLLVLVAGSLILLAIL). Topologically, residues 209–277 (SPYRLQRLTS…LFAVLAEELG (69 aa)) are periplasmic. The helical transmembrane segment at 278-298 (LIGEILLMGLFVLLIGRIILI) threads the bilayer. The Cytoplasmic segment spans residues 299–315 (GRRAENSNQLYSAYLAY). A helical membrane pass occupies residues 316-336 (GIALWLGLQVIINIGVTAGVL). Over 337–342 (PTKGLT) the chain is Periplasmic. The helical transmembrane segment at 343–363 (LPFISYGGSSLLMNCLAIGVI) threads the bilayer. Residues 364 to 372 (LRIAYETEN) lie on the Cytoplasmic side of the membrane.

Belongs to the SEDS family. FtsW subfamily.

It localises to the cell inner membrane. It catalyses the reaction [GlcNAc-(1-&gt;4)-Mur2Ac(oyl-L-Ala-gamma-D-Glu-L-Lys-D-Ala-D-Ala)](n)-di-trans,octa-cis-undecaprenyl diphosphate + beta-D-GlcNAc-(1-&gt;4)-Mur2Ac(oyl-L-Ala-gamma-D-Glu-L-Lys-D-Ala-D-Ala)-di-trans,octa-cis-undecaprenyl diphosphate = [GlcNAc-(1-&gt;4)-Mur2Ac(oyl-L-Ala-gamma-D-Glu-L-Lys-D-Ala-D-Ala)](n+1)-di-trans,octa-cis-undecaprenyl diphosphate + di-trans,octa-cis-undecaprenyl diphosphate + H(+). It functions in the pathway cell wall biogenesis; peptidoglycan biosynthesis. Peptidoglycan polymerase that is essential for cell division. The chain is Probable peptidoglycan glycosyltransferase FtsW from Coxiella burnetii (strain RSA 493 / Nine Mile phase I).